A 169-amino-acid polypeptide reads, in one-letter code: 6,7-dimethyl-8-ribityllumazine synthase (169 aa).

5-amino-6-(D-ribitylamino)uracil is bound by residues Tyr30, 61–63 (ALE), and 90–92 (CVI). Position 95–96 (95–96 (ET)) interacts with (2S)-2-hydroxy-3-oxobutyl phosphate. His98 serves as the catalytic Proton donor. Asn123 serves as a coordination point for 5-amino-6-(D-ribitylamino)uracil. (2S)-2-hydroxy-3-oxobutyl phosphate is bound at residue Arg137.

It belongs to the DMRL synthase family.

The enzyme catalyses (2S)-2-hydroxy-3-oxobutyl phosphate + 5-amino-6-(D-ribitylamino)uracil = 6,7-dimethyl-8-(1-D-ribityl)lumazine + phosphate + 2 H2O + H(+). Its pathway is cofactor biosynthesis; riboflavin biosynthesis; riboflavin from 2-hydroxy-3-oxobutyl phosphate and 5-amino-6-(D-ribitylamino)uracil: step 1/2. Functionally, catalyzes the formation of 6,7-dimethyl-8-ribityllumazine by condensation of 5-amino-6-(D-ribitylamino)uracil with 3,4-dihydroxy-2-butanone 4-phosphate. This is the penultimate step in the biosynthesis of riboflavin. In Methylorubrum populi (strain ATCC BAA-705 / NCIMB 13946 / BJ001) (Methylobacterium populi), this protein is 6,7-dimethyl-8-ribityllumazine synthase.